A 203-amino-acid polypeptide reads, in one-letter code: Putative 3-methyladenine DNA glycosylase (203 aa).

This sequence belongs to the DNA glycosylase MPG family.

In Clostridium beijerinckii (strain ATCC 51743 / NCIMB 8052) (Clostridium acetobutylicum), this protein is Putative 3-methyladenine DNA glycosylase.